A 615-amino-acid polypeptide reads, in one-letter code: Alpha-fetoprotein (615 aa).

An N-terminal signal peptide occupies residues 1–15; the sequence is MAVLPLSGAIRLSRG. Positions 14-16 match the Cell attachment site motif; sequence RGD. Albumin domains are found at residues 27 to 218, 223 to 415, and 416 to 609; these read WAKK…RRQA, KPIR…ELKK, and HIYE…VLVT. Disulfide bonds link cysteine 109/cysteine 121 and cysteine 120/cysteine 131. N-linked (GlcNAc...) asparagine glycosylation is found at asparagine 137 and asparagine 157. Cystine bridges form between cysteine 155-cysteine 200, cysteine 199-cysteine 213, cysteine 236-cysteine 282, cysteine 281-cysteine 289, cysteine 301-cysteine 315, cysteine 314-cysteine 325, cysteine 396-cysteine 405, cysteine 428-cysteine 458, and cysteine 457-cysteine 468. A Cell attachment site motif is present at residues 283–285; it reads RGD. Asparagine 472 carries N-linked (GlcNAc...) asparagine glycosylation. Cystine bridges form between cysteine 485-cysteine 501, cysteine 500-cysteine 511, cysteine 538-cysteine 593, and cysteine 592-cysteine 601.

This sequence belongs to the ALB/AFP/VDB family. As to quaternary structure, dimeric and trimeric forms have been found in addition to the monomeric form. Sulfated.

Its subcellular location is the secreted. Its function is as follows. Binds copper, nickel, and fatty acids as well as, and bilirubin less well than, serum albumin. The polypeptide is Alpha-fetoprotein (AFP) (Gallus gallus (Chicken)).